The sequence spans 114 residues: UPF0339 protein plu2779 (114 aa).

2 consecutive repeat copies span residues 11–59 and 62–110.

Belongs to the UPF0339 family. Duplicated subfamily.

This Photorhabdus laumondii subsp. laumondii (strain DSM 15139 / CIP 105565 / TT01) (Photorhabdus luminescens subsp. laumondii) protein is UPF0339 protein plu2779.